The following is a 299-amino-acid chain: Regucalcin (299 aa).

E18 serves as a coordination point for a divalent metal cation. Substrate is bound by residues R101, N103, and E121. Residue K144 is modified to N6-succinyllysine. 2 residues coordinate a divalent metal cation: N154 and D204. D204 functions as the Proton donor/acceptor in the catalytic mechanism. An N6-succinyllysine mark is found at K244 and K253.

The protein belongs to the SMP-30/CGR1 family. In terms of assembly, monomer. The cofactor is Zn(2+). Mn(2+) is required as a cofactor. Requires Ca(2+) as cofactor. Mg(2+) serves as cofactor.

Its subcellular location is the cytoplasm. The enzyme catalyses D-glucono-1,5-lactone + H2O = D-gluconate + H(+). It functions in the pathway cofactor biosynthesis; L-ascorbate biosynthesis via UDP-alpha-D-glucuronate pathway; L-ascorbate from UDP-alpha-D-glucuronate: step 3/4. Gluconolactonase with low activity towards other sugar lactones, including gulonolactone and galactonolactone. Catalyzes a key step in ascorbic acid (vitamin C) biosynthesis. Can also hydrolyze diisopropyl phosphorofluoridate and phenylacetate (in vitro). Calcium-binding protein. Modulates Ca(2+) signaling, and Ca(2+)-dependent cellular processes and enzyme activities. The sequence is that of Regucalcin (RGN) from Oryctolagus cuniculus (Rabbit).